The chain runs to 213 residues: MVRNEIKAVKEESKKRNFLESIEISINLKDVDLSDPKKRINEEIVLPSGRGKDLKVALISSEEMKLKAKNADYTFSPEDVSKFVDDKKSFKKLANKVDFFVAESTLMSSIGKNLGVILGPRGKIPRPVPPGQDPTALIENLKKSVRARSRDRRTFHVPIGTREMSDDDLYNNFVTVYKRIVSRLDKGPGNIDSIYIKTTMGKAIKVETGDLND.

This sequence belongs to the universal ribosomal protein uL1 family. In terms of assembly, part of the 50S ribosomal subunit.

Its function is as follows. Binds directly to 23S rRNA. Probably involved in E site tRNA release. In terms of biological role, protein L1 is also a translational repressor protein, it controls the translation of its operon by binding to its mRNA. In Picrophilus torridus (strain ATCC 700027 / DSM 9790 / JCM 10055 / NBRC 100828 / KAW 2/3), this protein is Large ribosomal subunit protein uL1.